The primary structure comprises 281 residues: 4-diphosphocytidyl-2-C-methyl-D-erythritol kinase (281 aa).

Lys15 is an active-site residue. 98 to 108 (PTGAGLGGGSS) contributes to the ATP binding site. Residue Asp140 is part of the active site.

It belongs to the GHMP kinase family. IspE subfamily.

It carries out the reaction 4-CDP-2-C-methyl-D-erythritol + ATP = 4-CDP-2-C-methyl-D-erythritol 2-phosphate + ADP + H(+). It participates in isoprenoid biosynthesis; isopentenyl diphosphate biosynthesis via DXP pathway; isopentenyl diphosphate from 1-deoxy-D-xylulose 5-phosphate: step 3/6. Its function is as follows. Catalyzes the phosphorylation of the position 2 hydroxy group of 4-diphosphocytidyl-2C-methyl-D-erythritol. The protein is 4-diphosphocytidyl-2-C-methyl-D-erythritol kinase of Neisseria meningitidis serogroup A / serotype 4A (strain DSM 15465 / Z2491).